Consider the following 409-residue polypeptide: Iron(III) salmochelin esterase (409 aa).

This sequence belongs to the Fes family.

The protein resides in the cytoplasm. The catalysed reaction is Fe(III)-C-5-deoxy-beta-D-glucosyl-enterobactin + H2O = Fe(III)-{di[N-(2,3-dihydroxybenzoyl)-L-seryl]-N-(C-5-[deoxy-beta-D-glucosyl]-2,3-dihydroxybenzoyl)-L-serine} + H(+). It carries out the reaction Fe(III)-{di[N-(2,3-dihydroxybenzoyl)-L-seryl]-N-(C-5-[deoxy-beta-D-glucosyl]-2,3-dihydroxybenzoyl)-L-serine} + H2O + H(+) = Fe(III)-{N-(2,3-dihydroxybenzoyl)-L-seryl-N-(C-5-[deoxy-beta-D-glucosyl]-2,3-dihydroxybenzoyl)-L-serine} + N-(2,3-dihydroxybenzoyl)-L-serine. It catalyses the reaction Fe(III)-{N-(2,3-dihydroxybenzoyl)-L-seryl-[N-(C-5-[deoxy-beta-D-glucosyl]-2,3-dihydroxybenzoyl)-L-serine]2} + H2O + H(+) = Fe(III)-{N-(2,3-dihydroxybenzoyl)-L-seryl-N-(C-5-[deoxy-beta-D-glucosyl]-2,3-dihydroxybenzoyl)-L-serine} + N-(C-5-[deoxy-beta-D-glucosyl]-2,3-dihydroxybenzoyl)-L-serine. The enzyme catalyses Fe(III)-di(C-5-deoxy-beta-D-glucosyl)-enterobactin + H2O = Fe(III)-{N-(2,3-dihydroxybenzoyl)-L-seryl-[N-(C-5-[deoxy-beta-D-glucosyl]-2,3-dihydroxybenzoyl)-L-serine]2} + H(+). The catalysed reaction is Fe(III)-{N-(2,3-dihydroxybenzoyl)-L-seryl-[N-(C-5-[deoxy-beta-D-glucosyl]-2,3-dihydroxybenzoyl)-L-serine]2} + H2O + H(+) = Fe(III)-[N-(C-5-[deoxy-beta-D-glucosyl]-2,3-dihydroxybenzoyl)-L-serine]2 + N-(2,3-dihydroxybenzoyl)-L-serine. It carries out the reaction Fe(III)-[N-(C-5-[deoxy-beta-D-glucosyl]-2,3-dihydroxybenzoyl)-L-serine]2 + H2O + H(+) = Fe(III)-[N-(C-5-[deoxy-beta-D-glucosyl]-2,3-dihydroxybenzoyl)-L-serine] + N-(C-5-[deoxy-beta-D-glucosyl]-2,3-dihydroxybenzoyl)-L-serine. Catalyzes the hydrolysis of both the apo and Fe3(+)-bound forms of enterobactin (Ent), monoglucosyl-C-Ent (MGE), diglucosyl-C-Ent (DGE) and triglucosyl-C-Ent (TGE). Shows higher catalytic efficiencies on Fe3(+)-bound forms. The initial linear trimer products are, in turn, very good substrates for further hydrolytic cleavage by IroD, leading to complete degradation of the trilactone to DHB-Ser and/or Glc-DHB-Ser monomers. Hydrolyzes MGE and DGE regioselectively. May be the ferric MGE/DGE esterase responsible for cytoplasmic iron release. This chain is Iron(III) salmochelin esterase, found in Escherichia coli O6:H1 (strain CFT073 / ATCC 700928 / UPEC).